The following is a 313-amino-acid chain: MFKIIDLFAGIGGIRLGFEQAFDDVRCVFSSEIDKYAVQTYQANHGGETVCGDITQTDVADIPDHDILSAGFPCQPFSQAGLKKGFADTRGTLFFDIERILLAKKPQAFLLENVKQLKGHDKGRTLQVILAHLQQAGYKVYTEVLKARDFGIPQNRERIYLVGFLNHDVDFRFPQPIGQATAVGDILEAYPDEKYTISDKLWQGYQRRKAENRAAGKGFGYGLFNAESAYTNTISARYYKDGSEILIEQPGKNPRKITPPEAARLQGFPDSFQIPVSDAQAYRQFGNSVCVPVIRAIAEQMKAALSAVSDRKV.

The 307-residue stretch at 2–308 folds into the SAM-dependent MTase C5-type domain; the sequence is FKIIDLFAGI…EQMKAALSAV (307 aa). The active site involves Cys74.

This sequence belongs to the class I-like SAM-binding methyltransferase superfamily. C5-methyltransferase family.

The catalysed reaction is a 2'-deoxycytidine in DNA + S-adenosyl-L-methionine = a 5-methyl-2'-deoxycytidine in DNA + S-adenosyl-L-homocysteine + H(+). A methylase, recognizes the double-stranded sequence 5'-CCNGG-3' and methylates C-2 on both strands. May be the equivalent of dcm in this bacteria, or it may protect the DNA from cleavage by the putative NlaXP endonuclease. This chain is Type II methyltransferase M.NlaX (nlaXM), found in Neisseria lactamica.